The following is a 469-amino-acid chain: IAA-alanine resistance protein 1 (469 aa).

Positions 1 to 28 (MSFSLRKLLVPILVLVLFLDLCVESGFS) are cleaved as a signal peptide. Positions 33-58 (ARDDHVHHHGGGCSHSHDHDHDHDHD) are disordered. The span at 47–58 (HSHDHDHDHDHD) shows a compositional bias: basic and acidic residues. The next 2 membrane-spanning stretches (helical) occupy residues 114–134 (CSLLVSLASLICLVLLPIMFV) and 141–161 (WFVDSLALFGAGAMLGDAFLH). A disordered region spans residues 170–197 (GHSHSNDHHENHDHHDHSHSDSPSHSHS). Basic and acidic residues predominate over residues 173–193 (HSNDHHENHDHHDHSHSDSPS). Residues 201 to 221 (LSVGLSVLAGIVVFLLVEKLV) traverse the membrane as a helical segment. Positions 228–315 (SSGSNTWGHH…GKSDKPEQVE (88 aa)) are disordered. The segment covering 235–246 (GHHHHHHHAGSK) has biased composition (basic residues). The segment covering 247–256 (KLKDEGDHNN) has biased composition (basic and acidic residues). Residues 257-279 (LDQQSSSDAIVNSSEKVSGGSTD) show a composition bias toward polar residues. The segment covering 292–315 (ATDKSDSGTEITSDGKSDKPEQVE) has biased composition (basic and acidic residues). The next 3 membrane-spanning stretches (helical) occupy residues 387–407 (LFFNFLSALVALAGTALVLVW), 415–435 (SLIEGFTAGGFIYIAVAGVLA), and 448–468 (SACHLISLILGMSVALCISLI).

Belongs to the ZIP transporter (TC 2.A.5) family. KE4/Catsup subfamily.

It localises to the membrane. Its function is as follows. May participate in auxin metabolism or response. Probable transporter. The chain is IAA-alanine resistance protein 1 (IAR1) from Arabidopsis thaliana (Mouse-ear cress).